Here is a 273-residue protein sequence, read N- to C-terminus: 2,3,4,5-tetrahydropyridine-2,6-dicarboxylate N-succinyltransferase (273 aa).

The protein belongs to the transferase hexapeptide repeat family.

The protein localises to the cytoplasm. The catalysed reaction is (S)-2,3,4,5-tetrahydrodipicolinate + succinyl-CoA + H2O = (S)-2-succinylamino-6-oxoheptanedioate + CoA. Its pathway is amino-acid biosynthesis; L-lysine biosynthesis via DAP pathway; LL-2,6-diaminopimelate from (S)-tetrahydrodipicolinate (succinylase route): step 1/3. In Acinetobacter baumannii (strain AB307-0294), this protein is 2,3,4,5-tetrahydropyridine-2,6-dicarboxylate N-succinyltransferase.